A 901-amino-acid polypeptide reads, in one-letter code: Protein translocase subunit SecA (901 aa).

Residues Q87, 105-109, and D512 each bind ATP; that span reads GEGKT. Residues 852 to 901 are disordered; that stretch reads AQMQQLSHQSDDEAAAEDLAAQTGERKVGRNDPCPCGSGKKYKQCHGRLS. C885, C887, C896, and H897 together coordinate Zn(2+). A compositionally biased stretch (basic residues) spans 891–901; it reads KKYKQCHGRLS.

It belongs to the SecA family. Monomer and homodimer. Part of the essential Sec protein translocation apparatus which comprises SecA, SecYEG and auxiliary proteins SecDF-YajC and YidC. Requires Zn(2+) as cofactor.

The protein resides in the cell inner membrane. Its subcellular location is the cytoplasm. The catalysed reaction is ATP + H2O + cellular proteinSide 1 = ADP + phosphate + cellular proteinSide 2.. In terms of biological role, part of the Sec protein translocase complex. Interacts with the SecYEG preprotein conducting channel. Has a central role in coupling the hydrolysis of ATP to the transfer of proteins into and across the cell membrane, serving both as a receptor for the preprotein-SecB complex and as an ATP-driven molecular motor driving the stepwise translocation of polypeptide chains across the membrane. This is Protein translocase subunit SecA from Klebsiella pneumoniae (strain 342).